The following is a 670-amino-acid chain: Protein phosphatase 1 regulatory subunit 15A (670 aa).

The Cytoplasmic segment spans residues 1–21; sequence MAPGQMPHQPAPWRGTHPLFL. Residues 1–60 are required for localization in the endoplasmic reticulum; it reads MAPGQMPHQPAPWRGTHPLFLLSPLMGLLSRAWSLLRAPGPPEPWLVEAVTEADQGGAGL. The segment at residues 22–39 is an intramembrane region (helical); it reads LSPLMGLLSRAWSLLRAP. Residues 40 to 670 are Cytoplasmic-facing; sequence GPPEPWLVEA…PSLDLSGRRG (631 aa). 3 disordered regions span residues 76-144, 159-178, and 191-501; these read GRHP…GQPA, PGEE…NEVT, and PGEE…EKWG. Basic and acidic residues predominate over residues 78–87; it reads HPQEETKDSG. The span at 191–202 shows a compositional bias: acidic residues; it reads PGEEEEEEEENG. Basic and acidic residues predominate over residues 254-265; that stretch reads KDKQAEKGDADP. A compositionally biased stretch (polar residues) spans 271–288; the sequence is SLAQRPSLRTWQHPSSAI. Over residues 289 to 299 the composition is skewed to acidic residues; that stretch reads TEEEEDRDSEE. The span at 302–312 shows a compositional bias: polar residues; the sequence is ASSSVPLTSAF. 2 stretches are compositionally biased toward acidic residues: residues 321–344 and 367–385; these read EDTE…EGEA and DTEE…EGEA. 4 tandem repeats follow at residues 355 to 381, 396 to 426, 436 to 462, and 478 to 511. A 4 X 34 AA approximate repeats region spans residues 355-511; it reads AFLSAWVYRP…EAESCPFRVA (157 aa). The interval 355 to 511 is interaction with SMAD7; it reads AFLSAWVYRP…EAESCPFRVA (157 aa). Over residues 388-397 the composition is skewed to polar residues; sequence SSATPPTSAF. Tyrosine 403 is subject to Phosphotyrosine. The segment covering 407–425 has biased composition (acidic residues); sequence DTEEEEDCDSEATEDEGEA. Tyrosine 443 is modified (phosphotyrosine). A compositionally biased stretch (acidic residues) spans 448–461; that stretch reads DTEEEDEYEDEDNE. The segment at 484–556 is interaction with KMT2A/MLL1; that stretch reads IYQPGEKTDG…DLERLLKTRK (73 aa). Basic and acidic residues predominate over residues 489–501; it reads EKTDGGEAAEKWG. The residue at position 513 (tyrosine 513) is a Phosphotyrosine. Residues 537-584 form an interaction with SMARCB1 region; sequence KSAQTPTRHQDLERLLKTRKVRFSEKVSIHPLVVWAGPAQAARRGPWE. The interval 622–670 is disordered; the sequence is NPPTSLATVPAPTQTSPMTPIQATPLSHALASPSPPCVSPSLDLSGRRG. Polar residues predominate over residues 623-645; that stretch reads PPTSLATVPAPTQTSPMTPIQAT.

This sequence belongs to the PPP1R15 family. In terms of assembly, interacts with PPP1CA. Interacts with EIF2S1. Interacts with PCNA. Interacts with LYN and KMT2A/MLL1. Interacts with PPP1R1A and SMARCB1. Interacts with SMAD7. Interacts with BAG1. Interacts with NOX4. Phosphorylated on tyrosine by LYN; which impairs its antiproliferative activity. In terms of processing, polyubiquitinated. Exhibits a rapid proteasomal degradation with a half-life under 1 hour, ubiquitination depends on endoplasmic reticulum association.

It localises to the endoplasmic reticulum membrane. The protein resides in the mitochondrion outer membrane. Its function is as follows. Recruits the serine/threonine-protein phosphatase PPP1CA to prevents excessive phosphorylation of the translation initiation factor eIF-2A/EIF2S1, thereby reversing the shut-off of protein synthesis initiated by stress-inducible kinases and facilitating recovery of cells from stress. Down-regulates the TGF-beta signaling pathway by promoting dephosphorylation of TGFB1 by PP1. May promote apoptosis by inducing TP53 phosphorylation on 'Ser-15'. Plays an essential role in autophagy by tuning translation during starvation, thus enabling lysosomal biogenesis and a sustained autophagic flux. This chain is Protein phosphatase 1 regulatory subunit 15A (PPP1R15A), found in Bos taurus (Bovine).